Consider the following 452-residue polypeptide: MLPLRCSWSFARANYSTKKELVTRYSGDFPEKLLNRKQKVPTHMYIANSEAAARINQYLEPHFQSSGCDTVMELNSGAGYFTRHLLDRESQFRRIILLESMDHFMPKIQELHTLYPERVKVRQGDFVNLWKLVYMDKMDGGSRVADLLSDVPQKAFTDDINMLVFGAVGSYPFFKHLINSLIFQTSLFNLGRCEMILAMPPPIYIHLTCNNEIGYLIYRSTSVLFQILFEHKFIAKVPREDFLPQQMAYSPTKSSKLGKVQSINPEYLYLVKFTPRRNLHELCQSQDLPALWFFIKQNYVSRRNRIIPNLEKWVPGCGPRLIINPKSSESVTPIYPDELPKKLPQYSCQSTTMSTRNYYPGINIYTQFGDLLPSQILTLFSQFRQWPEYGESSFLASLENALLKLETANDEPNLEDGVTLPEEDDAEADEIIEEESPVPATTPVKRRRKASS.

Ile46, Glu99, and Asp125 together coordinate S-adenosyl-L-methionine. The disordered stretch occupies residues 408–452 (ANDEPNLEDGVTLPEEDDAEADEIIEEESPVPATTPVKRRRKASS). The span at 421–436 (PEEDDAEADEIIEEES) shows a compositional bias: acidic residues.

Belongs to the class I-like SAM-binding methyltransferase superfamily. rRNA adenine N(6)-methyltransferase family. KsgA subfamily.

It localises to the mitochondrion. Probable S-adenosyl-L-methionine-dependent methyltransferase which specifically dimethylates mitochondrial 12S rRNA at the conserved stem loop. Also required for basal transcription of mitochondrial DNA. Also regulates mitochondrial DNA copy number. Stimulates transcription independently of the methyltransferase activity. This chain is Dimethyladenosine transferase 2, mitochondrial (mtTFB2), found in Drosophila melanogaster (Fruit fly).